Consider the following 729-residue polypeptide: 1,4-alpha-glucan branching enzyme GlgB (729 aa).

Catalysis depends on Asp405, which acts as the Nucleophile. Glu458 (proton donor) is an active-site residue.

Belongs to the glycosyl hydrolase 13 family. GlgB subfamily. In terms of assembly, monomer.

It carries out the reaction Transfers a segment of a (1-&gt;4)-alpha-D-glucan chain to a primary hydroxy group in a similar glucan chain.. It participates in glycan biosynthesis; glycogen biosynthesis. Catalyzes the formation of the alpha-1,6-glucosidic linkages in glycogen by scission of a 1,4-alpha-linked oligosaccharide from growing alpha-1,4-glucan chains and the subsequent attachment of the oligosaccharide to the alpha-1,6 position. In Mannheimia succiniciproducens (strain KCTC 0769BP / MBEL55E), this protein is 1,4-alpha-glucan branching enzyme GlgB.